The sequence spans 154 residues: Endoribonuclease YbeY (154 aa).

Zn(2+)-binding residues include His113, His117, and His123.

Belongs to the endoribonuclease YbeY family. It depends on Zn(2+) as a cofactor.

Its subcellular location is the cytoplasm. Single strand-specific metallo-endoribonuclease involved in late-stage 70S ribosome quality control and in maturation of the 3' terminus of the 16S rRNA. The polypeptide is Endoribonuclease YbeY (Verminephrobacter eiseniae (strain EF01-2)).